Consider the following 475-residue polypeptide: Ribulose bisphosphate carboxylase large chain (475 aa).

Positions 1–2 (MS) are excised as a propeptide. Pro3 bears the N-acetylproline mark. An N6,N6,N6-trimethyllysine modification is found at Lys14. Substrate-binding residues include Asn123 and Thr173. Lys175 (proton acceptor) is an active-site residue. Substrate is bound at residue Lys177. The Mg(2+) site is built by Lys201, Asp203, and Glu204. The residue at position 201 (Lys201) is an N6-carboxylysine. His294 functions as the Proton acceptor in the catalytic mechanism. Residues Arg295, His327, and Ser379 each coordinate substrate.

The protein belongs to the RuBisCO large chain family. Type I subfamily. In terms of assembly, heterohexadecamer of 8 large chains and 8 small chains; disulfide-linked. The disulfide link is formed within the large subunit homodimers. Mg(2+) is required as a cofactor. Post-translationally, the disulfide bond which can form in the large chain dimeric partners within the hexadecamer appears to be associated with oxidative stress and protein turnover.

It localises to the plastid. Its subcellular location is the chloroplast. It catalyses the reaction 2 (2R)-3-phosphoglycerate + 2 H(+) = D-ribulose 1,5-bisphosphate + CO2 + H2O. The catalysed reaction is D-ribulose 1,5-bisphosphate + O2 = 2-phosphoglycolate + (2R)-3-phosphoglycerate + 2 H(+). Functionally, ruBisCO catalyzes two reactions: the carboxylation of D-ribulose 1,5-bisphosphate, the primary event in carbon dioxide fixation, as well as the oxidative fragmentation of the pentose substrate in the photorespiration process. Both reactions occur simultaneously and in competition at the same active site. The chain is Ribulose bisphosphate carboxylase large chain (rbcL) from Marchantia polymorpha (Common liverwort).